We begin with the raw amino-acid sequence, 1121 residues long: MSLENEDKRARTRSKALRGPPETTAADLSCPTPGCTGSGHVRGKYSRHRSLQSCPLAKKRKLEGAEAEHLVSKRKSHPLKLALDEGYGVDSDGSEDTEVKDASVSDESEGTLEGAEAETSGQDEIHRPETAEGRSPVKSHFGSNPIGSATASSKGSYSSYQGIIATSLLNLGQIAEETLVEEDLGQAAKPGPGIVHLLQEAAEGAASEEGEKGLFIQPEDAEEVVEVTTERSQDLCPQSLEDAASEESSKQKGILSHEEEDEEEEEEEEEEEEDEEEEEEEEEEEEEEEEEEEEEEEEEEEEEEEEAAPDVIFQEDTSHTSAQKAPELRGPESPSPKPEYSVIVEVRSDDDKDEDTHSRKSTVTDESEMQDMMTRGNLGLLEQAIALKAEQVRTVCEPGCPPAEQSQLGLGEPGKAAKPLDTVRKSYYSKDPSRAEKREIKCPTPGCDGTGHVTGLYPHHRSLSGCPHKDRIPPEILAMHENVLKCPTPGCTGQGHVNSNRNTHRSLSGCPIAAAEKLAKSHEKQQPQTGDPSKSSSNSDRILRPMCFVKQLEVPPYGSYRPNVAPATPRANLAKELEKFSKVTFDYASFDAQVFGKRMLAPKIQTSETSPKAFQCFDYSQDAEAAHMAATAILNLSTRCWEMPENLSTKPQDLPSKSVDIEVDENGTLDLSMHKHRKRENAFPSSSSCSSSPGVKSPDASQRHSSTSAPSSSMTSPQSSQASRQDEWDRPLDYTKPSRLREEEPEESEPAAHSFASSEADDQEVSEENFEERKYPGEVTLTNFKLKFLSKDIKKELLTCPTPGCDGSGHITGNYASHRSLSGCPLADKSLRNLMAAHSADLKCPTPGCDGSGHITGNYASHRSLSGCPRAKKSGVKVAPTKDDKEDPELMKCPVPGCVGLGHISGKYASHRSASGCPLAARRQKEGSLNGSSFSWKSLKNEGPTCPTPGCDGSGHANGSFLTHRSLSGCPRATFAGKKGKLSGDEVLSPKFKTSDVLENDEEIKQLNQEIRDLNESNSEMEAAMVQLQSQISSMEKNLKNIEEENKLIEEQNEALFLELSGLSQALIQSLANIRLPHMEPICEQNFDAYVSTLTDMYSNQDPENKDLLESIKQAVRGIQV.

2 disordered regions span residues 1-156 (MSLE…SKGS) and 200-376 (EAAE…MTRG). A CCHHC-type 1 zinc finger spans residues 21–64 (PETTAADLSCPTPGCTGSGHVRGKYSRHRSLQSCPLAKKRKLEG). Zn(2+) contacts are provided by Cys-30, Cys-35, His-48, and Cys-54. The span at 41 to 50 (VRGKYSRHRS) shows a compositional bias: basic residues. Composition is skewed to basic and acidic residues over residues 62-71 (LEGAEAEHLV) and 123-132 (DEIHRPETAE). Over residues 147-156 (GSATASSKGS) the composition is skewed to low complexity. Positions 258–308 (EEEDEEEEEEEEEEEEDEEEEEEEEEEEEEEEEEEEEEEEEEEEEEEEEAA) are enriched in acidic residues. A compositionally biased stretch (basic and acidic residues) spans 346–358 (VRSDDDKDEDTHS). CCHHC-type zinc fingers lie at residues 433-476 (SRAE…PPEI) and 477-520 (LAMH…KLAK). Residues Cys-442, Cys-447, His-460, Cys-466, Cys-486, Cys-491, His-504, and Cys-510 each coordinate Zn(2+). Disordered stretches follow at residues 517–540 (KLAKSHEKQQPQTGDPSKSSSNSD) and 668–774 (TLDL…EERK). A compositionally biased stretch (polar residues) spans 526 to 540 (QPQTGDPSKSSSNSD). A compositionally biased stretch (low complexity) spans 705–723 (SSTSAPSSSMTSPQSSQAS). The span at 724 to 733 (RQDEWDRPLD) shows a compositional bias: basic and acidic residues. Residues 759 to 770 (EADDQEVSEENF) are compositionally biased toward acidic residues. CCHHC-type zinc fingers lie at residues 791 to 834 (KDIK…LRNL), 835 to 878 (MAAH…GVKV), 884 to 927 (DKED…QKEG), and 937 to 980 (KSLK…GKKG). Residues Cys-800, Cys-805, His-818, Cys-824, Cys-844, Cys-849, His-862, Cys-868, Cys-893, Cys-898, His-911, Cys-917, Cys-946, Cys-951, His-964, and Cys-970 each contribute to the Zn(2+) site.

It belongs to the MYT1 family. Interacts with STEAP3. In terms of tissue distribution, mostly in developing nervous system. Expressed in neural progenitors and oligodendrocyte lineage cells. More highly expressed in oligodendrocyte progenitors than in differentiated oligodendrocytes.

Its subcellular location is the nucleus. Its function is as follows. Binds to the promoter region of genes encoding proteolipid proteins of the central nervous system. May play a role in the development of neurons and oligodendroglia in the CNS. May regulate a critical transition point in oligodendrocyte lineage development by modulating oligodendrocyte progenitor proliferation relative to terminal differentiation and up-regulation of myelin gene transcription. This Homo sapiens (Human) protein is Myelin transcription factor 1 (MYT1).